A 677-amino-acid chain; its full sequence is Serine/threonine-protein kinase YPK2/YKR2 (677 aa).

Over residues 1–12 (MHSWRISKFKLG) the composition is skewed to basic residues. A disordered region spans residues 1–115 (MHSWRISKFK…ETQGPSSESG (115 aa)). Over residues 41–56 (KHHDGSPKNHNHEHEH) the composition is skewed to basic and acidic residues. 2 stretches are compositionally biased toward polar residues: residues 61-93 (INTN…NDNS) and 101-115 (SQSS…SESG). Residues threonine 63 and threonine 66 each carry the phosphothreonine modification. The residue at position 72 (serine 72) is a Phosphoserine. In terms of domain architecture, Protein kinase spans 344 to 599 (FDLLKVIGKG…TDEIRNHPFF (256 aa)). Residues 350 to 358 (IGKGSFGKV) and lysine 373 contribute to the ATP site. The active-site Proton acceptor is aspartate 467. Threonine 499 bears the Phosphothreonine mark. Threonine 501 bears the Phosphothreonine; by PKH2 mark. In terms of domain architecture, AGC-kinase C-terminal spans 600-670 (KDISWKKLLL…IGDEQLGDSP (71 aa)). At serine 641 the chain carries Phosphoserine; by TOR2. At serine 650 the chain carries Phosphoserine. Phosphothreonine; by TOR2 is present on threonine 659. Serine 669 carries the post-translational modification Phosphoserine.

Belongs to the protein kinase superfamily. AGC Ser/Thr protein kinase family. RAC subfamily. In terms of processing, autophosphorylated. Phosphorylated by PKH2 and TOR2.

The protein localises to the cytoplasm. The enzyme catalyses L-seryl-[protein] + ATP = O-phospho-L-seryl-[protein] + ADP + H(+). It catalyses the reaction L-threonyl-[protein] + ATP = O-phospho-L-threonyl-[protein] + ADP + H(+). Activated by phytosphingosine (PHS), a sphingoid long chain base. Activated by PKH2 phosphorylation. Kinase activity is regulated by TOR2 via direct phosphorylation of Ser-641 and Thr-659. Its function is as follows. Plays an essential role in the proliferation of yeast cells. Involved in a signaling pathway, required for optimal cell wall integrity, that acts in parallel with the PKC1-SLT2-dependent pathway. A substrate of TOR complex 2 (TORC2) and required for TORC2 to regulate spatial aspects of cell growth. Phosphorylation of residue Thr-501 is indispensable for function. May act as a downstream kinase in the sphingolipid-mediated signaling pathway. This is Serine/threonine-protein kinase YPK2/YKR2 (YPK2) from Saccharomyces cerevisiae (strain ATCC 204508 / S288c) (Baker's yeast).